The following is a 187-amino-acid chain: Adenylate kinase (187 aa).

10–15 (GSGKGT) is a binding site for ATP. The tract at residues 30–59 (STGDMLRAEIAAGSELGKQAKAVMDAGNLV) is NMP. Residues threonine 31, arginine 36, 57 to 59 (NLV), 85 to 88 (GYPR), and glutamine 92 contribute to the AMP site. Positions 126 to 136 (GRAKEQGRADD) are LID. An ATP-binding site is contributed by arginine 127. Arginine 133 and arginine 144 together coordinate AMP. Glycine 172 is a binding site for ATP.

It belongs to the adenylate kinase family. Monomer.

The protein localises to the cytoplasm. It carries out the reaction AMP + ATP = 2 ADP. It participates in purine metabolism; AMP biosynthesis via salvage pathway; AMP from ADP: step 1/1. In terms of biological role, catalyzes the reversible transfer of the terminal phosphate group between ATP and AMP. Plays an important role in cellular energy homeostasis and in adenine nucleotide metabolism. This Stenotrophomonas maltophilia (strain R551-3) protein is Adenylate kinase.